A 422-amino-acid chain; its full sequence is MSFKVPRGTQDILPGQSEKWQKVEAIIRDICRVYRYNEIRTPIFEQTDLFARGVGETTDVVQKEMYTFEDRGGRSLTLRPENTAGVVRAYVEHKMFGAPDQPVKLSYLGPMFRYERQQAGRYRQFVQFGVEAIGSADPAIDAEVIALAMDVYESAGLKDLKLVINSLGDKETRDTHRTALLQHFEPHIHEFCSDCQNRLQKNPLRILDCKVDREHPLMKTAPALTEFLTEESAAYFAQVKSYLDTLGITYVVDPNLVRGLDYYNHTTFEIMSTASGFGAITTLCGGGRYNGLVQEIGGPDVPGIGFALSIERLLLALEAEGVELDTASGLDVYIIAMGEDAKQKAVELTSTFRAKGLATEMDYLDRKMKAQMKSADRLGAKYTIVLGETELEEQAAAVKHMESGEQHKVAFSELVNYLSQQS.

Belongs to the class-II aminoacyl-tRNA synthetase family. Homodimer.

The protein resides in the cytoplasm. The enzyme catalyses tRNA(His) + L-histidine + ATP = L-histidyl-tRNA(His) + AMP + diphosphate + H(+). The chain is Histidine--tRNA ligase from Lysinibacillus sphaericus (strain C3-41).